The primary structure comprises 490 residues: Betaine aldehyde dehydrogenase (490 aa).

Residues threonine 26, isoleucine 27, and aspartate 93 each coordinate K(+). Residue 150 to 152 (GAW) participates in NAD(+) binding. Residue lysine 162 is the Charge relay system of the active site. 176–179 (KPSE) contacts NAD(+). Valine 180 contributes to the K(+) binding site. 230-233 (GVAS) lines the NAD(+) pocket. Residue leucine 246 participates in K(+) binding. The active-site Proton acceptor is the glutamate 252. The NAD(+) site is built by glycine 254, cysteine 286, and glutamate 387. Cysteine 286 acts as the Nucleophile in catalysis. Cysteine 286 is subject to Cysteine sulfenic acid (-SOH). Residues lysine 457 and glycine 460 each coordinate K(+). The Charge relay system role is filled by glutamate 464.

The protein belongs to the aldehyde dehydrogenase family. As to quaternary structure, dimer of dimers. K(+) serves as cofactor.

It carries out the reaction betaine aldehyde + NAD(+) + H2O = glycine betaine + NADH + 2 H(+). It functions in the pathway amine and polyamine biosynthesis; betaine biosynthesis via choline pathway; betaine from betaine aldehyde: step 1/1. In terms of biological role, involved in the biosynthesis of the osmoprotectant glycine betaine. Catalyzes the irreversible oxidation of betaine aldehyde to the corresponding acid. The protein is Betaine aldehyde dehydrogenase of Escherichia coli (strain SMS-3-5 / SECEC).